We begin with the raw amino-acid sequence, 263 residues long: MAVGKNKGLSKGGKKGVKKKIVDPFTRKDWYDVKAPSMFSKRQVGTTLVNRTQGTKIASEGLKGRVFEVSLADLQADTDAERSFRKFRLIAEDVQGRNVLCNFHGMDLTTDKLRWMVKKWQTLIEANIDVKTTDGYVLRVFCIGFTNKDSLSQRKTCYAQHTQVRAIRKKMCEIITRDVTNSELREVVNKLIPDSIAKDIEKACHGIYPLRDVCIRKVKVLKRPRFEISKLMELHGEGGGGKREAGDKSERPEGYEPPVQESV.

Residues 235-254 (HGEGGGGKREAGDKSERPEG) are compositionally biased toward basic and acidic residues. Positions 235-263 (HGEGGGGKREAGDKSERPEGYEPPVQESV) are disordered.

It belongs to the eukaryotic ribosomal protein eS1 family. In terms of assembly, component of the small ribosomal subunit. Mature ribosomes consist of a small (40S) and a large (60S) subunit. The 40S subunit contains about 33 different proteins and 1 molecule of RNA (18S). The 60S subunit contains about 49 different proteins and 3 molecules of RNA (28S, 5.8S and 5S).

Its subcellular location is the cytoplasm. This chain is Small ribosomal subunit protein eS1, found in Bombyx mandarina (Wild silk moth).